The primary structure comprises 236 residues: 2-C-methyl-D-erythritol 4-phosphate cytidylyltransferase (236 aa).

Belongs to the IspD/TarI cytidylyltransferase family. IspD subfamily.

The enzyme catalyses 2-C-methyl-D-erythritol 4-phosphate + CTP + H(+) = 4-CDP-2-C-methyl-D-erythritol + diphosphate. Its pathway is isoprenoid biosynthesis; isopentenyl diphosphate biosynthesis via DXP pathway; isopentenyl diphosphate from 1-deoxy-D-xylulose 5-phosphate: step 2/6. Functionally, catalyzes the formation of 4-diphosphocytidyl-2-C-methyl-D-erythritol from CTP and 2-C-methyl-D-erythritol 4-phosphate (MEP). The sequence is that of 2-C-methyl-D-erythritol 4-phosphate cytidylyltransferase from Burkholderia cenocepacia (strain ATCC BAA-245 / DSM 16553 / LMG 16656 / NCTC 13227 / J2315 / CF5610) (Burkholderia cepacia (strain J2315)).